Here is an 800-residue protein sequence, read N- to C-terminus: Phenylalanine--tRNA ligase beta subunit (800 aa).

One can recognise a tRNA-binding domain in the interval 39–154; it reads TKDIKNLVVG…ESQVPGTDAL (116 aa). The B5 domain maps to 408–483; sequence AFITPIDITA…RIYGYDDIPS (76 aa). D461, D467, E470, and E471 together coordinate Mg(2+). In terms of domain architecture, FDX-ACB spans 708 to 800; that stretch reads PRFPGMSRDI…ALIEQGAVIR (93 aa).

Belongs to the phenylalanyl-tRNA synthetase beta subunit family. Type 1 subfamily. As to quaternary structure, tetramer of two alpha and two beta subunits. Mg(2+) is required as a cofactor.

Its subcellular location is the cytoplasm. It carries out the reaction tRNA(Phe) + L-phenylalanine + ATP = L-phenylalanyl-tRNA(Phe) + AMP + diphosphate + H(+). In Staphylococcus aureus (strain MRSA252), this protein is Phenylalanine--tRNA ligase beta subunit.